The chain runs to 111 residues: MEASAKLTFARLSPRKTRLVVDMVRGKGIQDALTILRFSPQASAKLVSKLLRSAVANAEQKGASDVDRLYVKSISVDGGPVLKRFVPRAMGRASKIRKPTSHITVVLADKQ.

Belongs to the universal ribosomal protein uL22 family. Part of the 50S ribosomal subunit.

In terms of biological role, this protein binds specifically to 23S rRNA; its binding is stimulated by other ribosomal proteins, e.g. L4, L17, and L20. It is important during the early stages of 50S assembly. It makes multiple contacts with different domains of the 23S rRNA in the assembled 50S subunit and ribosome. Its function is as follows. The globular domain of the protein is located near the polypeptide exit tunnel on the outside of the subunit, while an extended beta-hairpin is found that lines the wall of the exit tunnel in the center of the 70S ribosome. The protein is Large ribosomal subunit protein uL22 of Geobacter sulfurreducens (strain ATCC 51573 / DSM 12127 / PCA).